A 189-amino-acid chain; its full sequence is Blue copper protein (189 aa).

The first 24 residues, 1 to 24, serve as a signal peptide directing secretion; that stretch reads MAFSNALVLCFLLAIINMALPSLA. A Phytocyanin domain is found at 25–124; the sequence is TVYTVGDTSG…GMKLSIKVKA (100 aa). Cu cation-binding residues include His65, Cys106, and His111. Cys78 and Cys106 are oxidised to a cystine. Low complexity predominate over residues 127–160; that stretch reads GSSAAPSATPSSSGKGSPSSDDTPAATTTTTTPT. A disordered region spans residues 127–165; the sequence is GSSAAPSATPSSSGKGSPSSDDTPAATTTTTTPTKQNES. N-linked (GlcNAc...) asparagine glycosylation is present at Asn163.

This is Blue copper protein from Pisum sativum (Garden pea).